The sequence spans 595 residues: Protein kinase C iota type (595 aa).

Over residues 1–12 the composition is skewed to polar residues; the sequence is MPTQRDSSTMSH. Residues 1–21 form a disordered region; it reads MPTQRDSSTMSHTVACGGGGD. Pro-2 carries the post-translational modification N-acetylproline. Residues 2 to 28 form a required for interaction with RAB2 region; that stretch reads PTQRDSSTMSHTVACGGGGDHSHQVRV. Residues 2–252 are regulatory domain; it reads PTQRDSSTMS…KASSSLGLQD (251 aa). At Thr-3 the chain carries Phosphothreonine. Ser-7 and Ser-8 each carry phosphoserine. At Thr-9 the chain carries Phosphothreonine. The region spanning 25 to 108 is the PB1 domain; sequence QVRVKAYYRG…SELLIHVFPC (84 aa). The segment at 72–91 is interaction with PARD6A; sequence DEEGDPCTVSSQLELEEAFR. The Pseudosubstrate signature appears at 125 to 134; that stretch reads YRRGARRWRK. A Phorbol-ester/DAG-type zinc finger spans residues 140–190; sequence GHTFQAKRFNRRAHCAICTDRIWGLGRQGYKCINCKLLVHKKCHKLVTIEC. The region spanning 253 to 521 is the Protein kinase domain; the sequence is FDLLRVIGRG…FADIQGHPFF (269 aa). 259–267 is an ATP binding site; it reads IGRGSYAKV. A phosphotyrosine; by SRC mark is found at Tyr-264 and Tyr-279. Lys-282 is an ATP binding site. Residue Tyr-333 is modified to Phosphotyrosine; by SRC. The Proton acceptor role is filled by Asp-377. Phosphothreonine is present on residues Thr-411 and Thr-563. One can recognise an AGC-kinase C-terminal domain in the interval 522-593; the sequence is RNVDWDMMEQ…INPLLMSAEE (72 aa).

It belongs to the protein kinase superfamily. AGC Ser/Thr protein kinase family. PKC subfamily. In terms of assembly, forms a complex with SQSTM1 and MP2K5. Interacts directly with SQSTM1. Interacts with IKBKB. Interacts with PARD6A, PARD6B and PARD6G. Part of a quaternary complex containing aPKC, PARD3, a PARD6 protein (PARD6A, PARD6B or PARD6G) and a GTPase protein (CDC42 or RAC1). Part of a complex with LLGL1 and PARD6B. Interacts with ADAP1/CENTA1. Interaction with SMG1, through the ZN-finger domain, activates the kinase activity. Interacts with CDK7. Forms a complex with RAB2A and GAPDH involved in recruitment onto the membrane of vesicular tubular clusters (VTCs). Interacts with ECT2 ('Thr-359' phosphorylated form). Interacts with VAMP2. Interacts with WDFY2 (via WD repeats 1-3). In terms of processing, phosphorylation at Thr-411 in the activation loop is not mandatory for activation. Upon neuronal growth factor (NGF) stimulation, phosphorylated by SRC at Tyr-264, Tyr-279 and Tyr-333. Phosphorylation on Tyr-264 facilitates binding to KPNB1/importin-beta regulating entry of PRKCI into the nucleus. Phosphorylation on Tyr-333 is important for NF-kappa-B stimulation. Phosphorylated at Thr-563 during the initial phase of long term potentiation.

The protein resides in the cytoplasm. It is found in the membrane. The protein localises to the endosome. It localises to the nucleus. It catalyses the reaction L-seryl-[protein] + ATP = O-phospho-L-seryl-[protein] + ADP + H(+). The catalysed reaction is L-threonyl-[protein] + ATP = O-phospho-L-threonyl-[protein] + ADP + H(+). Its activity is regulated as follows. Atypical PKCs (PRKCI and PRKCZ) exhibit an elevated basal enzymatic activity (that may be due to the interaction with SMG1 or SQSTM1) and are not regulated by diacylglycerol, phosphatidylserine, phorbol esters or calcium ions. Two specific sites, Thr-411 (activation loop of the kinase domain) and Thr-563 (turn motif), need to be phosphorylated for its full activation. Might also be a target for novel lipid activators that are elevated during nutrient-stimulated insulin secretion. In terms of biological role, calcium- and diacylglycerol-independent serine/ threonine-protein kinase that plays a general protective role against apoptotic stimuli, is involved in NF-kappa-B activation, cell survival, differentiation and polarity, and contributes to the regulation of microtubule dynamics in the early secretory pathway. Is necessary for BCR-ABL oncogene-mediated resistance to apoptotic drug in leukemia cells, protecting leukemia cells against drug-induced apoptosis. In cultured neurons, prevents amyloid beta protein-induced apoptosis by interrupting cell death process at a very early step. In glioblastoma cells, may function downstream of phosphatidylinositol 3-kinase (PI3K) and PDPK1 in the promotion of cell survival by phosphorylating and inhibiting the pro-apoptotic factor BAD. Can form a protein complex in non-small cell lung cancer (NSCLC) cells with PARD6A and ECT2 and regulate ECT2 oncogenic activity by phosphorylation, which in turn promotes transformed growth and invasion. In response to nerve growth factor (NGF), acts downstream of SRC to phosphorylate and activate IRAK1, allowing the subsequent activation of NF-kappa-B and neuronal cell survival. Functions in the organization of the apical domain in epithelial cells by phosphorylating EZR. This step is crucial for activation and normal distribution of EZR at the early stages of intestinal epithelial cell differentiation. Forms a protein complex with LLGL1 and PARD6B independently of PARD3 to regulate epithelial cell polarity. Plays a role in microtubule dynamics in the early secretory pathway through interaction with RAB2A and GAPDH and recruitment to vesicular tubular clusters (VTCs). In human coronary artery endothelial cells (HCAEC), is activated by saturated fatty acids and mediates lipid-induced apoptosis. Downstream of PI3K is required for insulin-stimulated glucose transport. Activates RAB4A and promotes its association with KIF3A which is required for the insulin-induced SLC2A4/GLUT4 translocation in adipocytes. Is essential in early embryogenesis and development of differentiating photoreceptors by playing a role in the establishment of epithelial and neuronal polarity. Involved in early synaptic long term potentiation phase in CA1 hippocampal cells and short term memory formation. This is Protein kinase C iota type (Prkci) from Mus musculus (Mouse).